The chain runs to 313 residues: LOB domain-containing protein 36 (313 aa).

An LOB domain is found at 6 to 107 (SPCAACKFLR…HDLENAKKEL (102 aa)). The tract at residues 245–313 (GNFVDSPSTN…SEEGRRNVIG (69 aa)) is disordered. Positions 249–260 (DSPSTNNNYHTD) are enriched in polar residues. Low complexity predominate over residues 280-302 (PSQSSQPLPLQTQETQTQTQPNS).

This sequence belongs to the LOB domain-containing protein family. Expressed in trichomes, at the base of many lateral organs, including branching points of the inflorescence and floral organs and in the distal part of the pistil at stages when style and stigma start to develop. Also detected in pedicels and at the base of petals and sepals.

In terms of biological role, controls the proximal-distal patterning in petals and the adaxial-abaxial determination of leaves. Involved in the repression of the homeobox gene BP. The chain is LOB domain-containing protein 36 (LBD36) from Arabidopsis thaliana (Mouse-ear cress).